We begin with the raw amino-acid sequence, 611 residues long: Putative pentatricopeptide repeat-containing protein At1g56570 (611 aa).

PPR repeat units lie at residues 44–74 (HHIL…MPDR), 75–109 (DVVA…GTSP), 110–144 (NEFT…GMEG), 145–176 (SLYV…IKVK), 177–211 (NDVT…NAEV), 212–246 (TPYC…GFQS), 247–281 (NLPV…DLIT), 282–311 (WNTL…GFVP), 312–346 (NCYT…GFNK), 347–377 (NVEL…IVDR), 379–413 (NLVS…GIRP), 414–444 (DRIV…MESE), and 450–480 (DRDI…MPFK). A type E motif region spans residues 485 to 561 (TWGAILGACK…EAGMSWILVE (77 aa)). The interval 562 to 592 (NQVFSFAVSDKMCPNASSVYSVLGLLIEETR) is type E(+) motif.

This sequence belongs to the PPR family. PCMP-E subfamily.

In Arabidopsis thaliana (Mouse-ear cress), this protein is Putative pentatricopeptide repeat-containing protein At1g56570 (PCMP-E64).